The chain runs to 149 residues: Ribosome-binding factor A (149 aa).

The interval 124-149 (AKLREGAVPAGDADPYKTSSKSESEE) is disordered.

The protein belongs to the RbfA family. In terms of assembly, monomer. Binds 30S ribosomal subunits, but not 50S ribosomal subunits or 70S ribosomes.

It localises to the cytoplasm. Functionally, one of several proteins that assist in the late maturation steps of the functional core of the 30S ribosomal subunit. Associates with free 30S ribosomal subunits (but not with 30S subunits that are part of 70S ribosomes or polysomes). Required for efficient processing of 16S rRNA. May interact with the 5'-terminal helix region of 16S rRNA. The protein is Ribosome-binding factor A of Corynebacterium glutamicum (strain R).